Consider the following 453-residue polypeptide: NADH-quinone oxidoreductase subunit D (453 aa).

Over residues 1–21 the composition is skewed to basic and acidic residues; that stretch reads MKDTETRPGRHRAPEPAHPEQ. The disordered stretch occupies residues 1-30; it reads MKDTETRPGRHRAPEPAHPEQPDTTGDTVV.

The protein belongs to the complex I 49 kDa subunit family. NDH-1 is composed of 14 different subunits. Subunits NuoB, C, D, E, F, and G constitute the peripheral sector of the complex.

It is found in the cell membrane. The enzyme catalyses a quinone + NADH + 5 H(+)(in) = a quinol + NAD(+) + 4 H(+)(out). NDH-1 shuttles electrons from NADH, via FMN and iron-sulfur (Fe-S) centers, to quinones in the respiratory chain. The immediate electron acceptor for the enzyme in this species is believed to be a menaquinone. Couples the redox reaction to proton translocation (for every two electrons transferred, four hydrogen ions are translocated across the cytoplasmic membrane), and thus conserves the redox energy in a proton gradient. In Nocardia farcinica (strain IFM 10152), this protein is NADH-quinone oxidoreductase subunit D.